Reading from the N-terminus, the 139-residue chain is Small ribosomal subunit protein uS11 (139 aa).

Disordered regions lie at residues 1-33 (MPPA…AAHI) and 118-139 (GAIS…RRRV). Basic residues predominate over residues 14–23 (KGQKTRRREK).

It belongs to the universal ribosomal protein uS11 family. As to quaternary structure, part of the 30S ribosomal subunit. Interacts with proteins S7 and S18. Binds to IF-3.

Functionally, located on the platform of the 30S subunit, it bridges several disparate RNA helices of the 16S rRNA. Forms part of the Shine-Dalgarno cleft in the 70S ribosome. The sequence is that of Small ribosomal subunit protein uS11 from Mycobacterium tuberculosis (strain ATCC 25177 / H37Ra).